The chain runs to 311 residues: Beta-ketoacyl-[acyl-carrier-protein] synthase III (311 aa).

Residues Cys114 and His238 contribute to the active site. The tract at residues Gln239–Arg243 is ACP-binding. Asn268 is a catalytic residue.

The protein belongs to the thiolase-like superfamily. FabH family. As to quaternary structure, homodimer.

The protein resides in the cytoplasm. The enzyme catalyses malonyl-[ACP] + acetyl-CoA + H(+) = 3-oxobutanoyl-[ACP] + CO2 + CoA. The protein operates within lipid metabolism; fatty acid biosynthesis. Catalyzes the condensation reaction of fatty acid synthesis by the addition to an acyl acceptor of two carbons from malonyl-ACP. Catalyzes the first condensation reaction which initiates fatty acid synthesis and may therefore play a role in governing the total rate of fatty acid production. Possesses both acetoacetyl-ACP synthase and acetyl transacylase activities. Its substrate specificity determines the biosynthesis of branched-chain and/or straight-chain of fatty acids. This Neorickettsia sennetsu (strain ATCC VR-367 / Miyayama) (Ehrlichia sennetsu) protein is Beta-ketoacyl-[acyl-carrier-protein] synthase III.